A 179-amino-acid polypeptide reads, in one-letter code: Cytochrome b6-f complex iron-sulfur subunit 1 (179 aa).

Residues 21 to 43 (LLTFGTVTGVALGALYPVVNYFI) form a helical membrane-spanning segment. Residues 61–162 (GNDVSVSKFL…AKTENDKIVL (102 aa)) form the Rieske domain. Residues Cys108, His110, Cys126, and His129 each contribute to the [2Fe-2S] cluster site. Cysteines 113 and 128 form a disulfide.

The protein belongs to the Rieske iron-sulfur protein family. The 4 large subunits of the cytochrome b6-f complex are cytochrome b6, subunit IV (17 kDa polypeptide, PetD), cytochrome f and the Rieske protein, while the 4 small subunits are PetG, PetL, PetM and PetN. The complex functions as a dimer. Requires [2Fe-2S] cluster as cofactor.

It localises to the cellular thylakoid membrane. It carries out the reaction 2 oxidized [plastocyanin] + a plastoquinol + 2 H(+)(in) = 2 reduced [plastocyanin] + a plastoquinone + 4 H(+)(out). In terms of biological role, component of the cytochrome b6-f complex, which mediates electron transfer between photosystem II (PSII) and photosystem I (PSI), cyclic electron flow around PSI, and state transitions. This is Cytochrome b6-f complex iron-sulfur subunit 1 from Nostoc sp. (strain PCC 7120 / SAG 25.82 / UTEX 2576).